Consider the following 134-residue polypeptide: Small ribosomal subunit protein uS11 (134 aa).

Belongs to the universal ribosomal protein uS11 family. Part of the 30S ribosomal subunit. Interacts with proteins S7 and S18. Binds to IF-3.

Functionally, located on the platform of the 30S subunit, it bridges several disparate RNA helices of the 16S rRNA. Forms part of the Shine-Dalgarno cleft in the 70S ribosome. This Micrococcus luteus (strain ATCC 4698 / DSM 20030 / JCM 1464 / CCM 169 / CCUG 5858 / IAM 1056 / NBRC 3333 / NCIMB 9278 / NCTC 2665 / VKM Ac-2230) (Micrococcus lysodeikticus) protein is Small ribosomal subunit protein uS11.